The following is a 950-amino-acid chain: Oxysterol-binding protein-related protein 1 (950 aa).

The interaction with RAB7A stretch occupies residues 1 to 237 (MNTEAEQQLL…NKVVHKALKR (237 aa)). ANK repeat units lie at residues 47 to 76 (LGWT…KVNM), 80 to 109 (MGDT…DTTV), and 175 to 204 (LGNT…DPSL). Residues 235 to 334 (LKRFEGPLWK…WLEAIEEHSA (100 aa)) form the PH domain. Residues 430–463 (NFKLEQEQEKNKILSEALETLATEHHELERSLVE) are a coiled coil. The FFAT signature appears at 469 to 483 (SILSEDEFYDALSGS). Disordered regions lie at residues 795-821 (KKNT…VPDS) and 881-913 (MENG…SEED). Residues 877-913 (DIRAMENGEIDQASEEKKRLEEKQRAARKNRSKSEED) adopt a coiled-coil conformation. The span at 890–901 (SEEKKRLEEKQR) shows a compositional bias: basic and acidic residues.

The protein belongs to the OSBP family. As to quaternary structure, interacts (via FFAT motif) with VAPA. Interacts (via FFAT motif) with VAPB. Interacts with the GTP-bound form of RAB7A. Interacts with OAS1B. Interacts (via FFAT motif) with MOSPD2 (via MSP domain). In terms of tissue distribution, detected in prostate and liver.

It localises to the late endosome. In terms of biological role, binds phospholipids; exhibits strong binding to phosphatidic acid and weak binding to phosphatidylinositol 3-phosphate. Stabilizes GTP-bound RAB7A on late endosomes/lysosomes and alters functional properties of late endocytic compartments via its interaction with RAB7A. Binds 25-hydroxycholesterol and cholesterol. This Rattus norvegicus (Rat) protein is Oxysterol-binding protein-related protein 1.